Consider the following 393-residue polypeptide: G protein-activated inward rectifier potassium channel 3 (393 aa).

Residues 1–23 (MAQENAAFSPGSEEPPRRRGRQR) are disordered. Residues 1 to 57 (MAQENAAFSPGSEEPPRRRGRQRYVEKDGRCNVQQGNVRETYRYLTDLFTTLVDLQW) lie on the Cytoplasmic side of the membrane. Residues 58–82 (RLSLLFFVLAYALTWLFFGAIWWLI) form a helical membrane-spanning segment. The Extracellular portion of the chain corresponds to 83–106 (AYGRGDLEHLEDTAWTPCVNNLNG). The segment at residues 107 to 118 (FVAAFLFSIETE) is an intramembrane region (helical; Pore-forming). The segment at residues 119–125 (TTIGYGH) is an intramembrane region (pore-forming). A Selectivity filter motif is present at residues 120 to 125 (TIGYGH). The Extracellular segment spans residues 126 to 134 (RVITDQCPE). Residues 135–156 (GIVLLLLQAILGSMVNAFMVGC) form a helical membrane-spanning segment. Over 157 to 393 (MFVKISQPNK…LPPPESESKV (237 aa)) the chain is Cytoplasmic. The interval 360–393 (KVEEEGAGEGAGAGDGADKEQNGCLPPPESESKV) is disordered. Over residues 384–393 (LPPPESESKV) the composition is skewed to pro residues. Positions 390–393 (ESKV) match the PDZ-binding motif.

This sequence belongs to the inward rectifier-type potassium channel (TC 1.A.2.1) family. KCNJ9 subfamily. In terms of assembly, associates with KCNJ3/GIRK1 to form a G-protein-activated heteromultimer pore-forming unit. Interacts (via PDZ-binding motif) with SNX27 (via PDZ domain); the interaction is required when endocytosed to prevent degradation in lysosomes and promote recycling to the plasma membrane.

It is found in the membrane. The catalysed reaction is K(+)(in) = K(+)(out). This receptor is controlled by G proteins. Inward rectifier potassium channels are characterized by a greater tendency to allow potassium to flow into the cell rather than out of it. Their voltage dependence is regulated by the concentration of extracellular potassium; as external potassium is raised, the voltage range of the channel opening shifts to more positive voltages. The inward rectification is mainly due to the blockage of outward current by internal magnesium. Unable to produce channel activity when expressed alone but forms a functional channel in association with KCNJ3/GIRK1. The polypeptide is G protein-activated inward rectifier potassium channel 3 (Kcnj9) (Rattus norvegicus (Rat)).